The primary structure comprises 187 residues: Orotate phosphoribosyltransferase (187 aa).

Residue 110–118 participates in 5-phospho-alpha-D-ribose 1-diphosphate binding; that stretch reads EDVVTTGGS. Orotate contacts are provided by T114 and R142.

It belongs to the purine/pyrimidine phosphoribosyltransferase family. PyrE subfamily. As to quaternary structure, homodimer. It depends on Mg(2+) as a cofactor.

The enzyme catalyses orotidine 5'-phosphate + diphosphate = orotate + 5-phospho-alpha-D-ribose 1-diphosphate. Its pathway is pyrimidine metabolism; UMP biosynthesis via de novo pathway; UMP from orotate: step 1/2. Functionally, catalyzes the transfer of a ribosyl phosphate group from 5-phosphoribose 1-diphosphate to orotate, leading to the formation of orotidine monophosphate (OMP). This chain is Orotate phosphoribosyltransferase, found in Thermotoga maritima (strain ATCC 43589 / DSM 3109 / JCM 10099 / NBRC 100826 / MSB8).